The following is a 97-amino-acid chain: MKTIYDIIIRPVLTEKAVKDNEKKNTLTFEVDMNASKTEIKEAVEKIFNVKVKEVRTLIVKPKPKRFGFRSSGYKKAWKKAIVKVESEKPINIAELV.

The protein belongs to the universal ribosomal protein uL23 family. As to quaternary structure, part of the 50S ribosomal subunit. Contacts protein L29, and trigger factor when it is bound to the ribosome.

Its function is as follows. One of the early assembly proteins it binds 23S rRNA. One of the proteins that surrounds the polypeptide exit tunnel on the outside of the ribosome. Forms the main docking site for trigger factor binding to the ribosome. The polypeptide is Large ribosomal subunit protein uL23 (Sulfurihydrogenibium sp. (strain YO3AOP1)).